Reading from the N-terminus, the 405-residue chain is S-adenosylmethionine synthase (405 aa).

H22 contributes to the ATP binding site. D24 provides a ligand contact to Mg(2+). E50 is a K(+) binding site. The L-methionine site is built by E63 and Q107. Positions 107-117 (QSPDIAQGVDR) are flexible loop. ATP-binding positions include 184–186 (DGK), 250–251 (RF), D259, 265–266 (RK), A282, and K286. L-methionine is bound at residue D259. An L-methionine-binding site is contributed by K290.

It belongs to the AdoMet synthase family. As to quaternary structure, homotetramer; dimer of dimers. The cofactor is Mg(2+). Requires K(+) as cofactor.

The protein resides in the cytoplasm. It carries out the reaction L-methionine + ATP + H2O = S-adenosyl-L-methionine + phosphate + diphosphate. Its pathway is amino-acid biosynthesis; S-adenosyl-L-methionine biosynthesis; S-adenosyl-L-methionine from L-methionine: step 1/1. In terms of biological role, catalyzes the formation of S-adenosylmethionine (AdoMet) from methionine and ATP. The overall synthetic reaction is composed of two sequential steps, AdoMet formation and the subsequent tripolyphosphate hydrolysis which occurs prior to release of AdoMet from the enzyme. The chain is S-adenosylmethionine synthase from Roseiflexus sp. (strain RS-1).